A 731-amino-acid chain; its full sequence is MSSIARPPDPCLVAIILIVRSRAGPRFVFHYPPNPLSENGLRAAPKGRRPSRAKSAKSNDSSSSEESGSTSDEDEEEAHAQSQNASSADVWEKLLSPSRSWHKRRFEVGINDLAFVGWPVFVREDGTWRKQRRKKKKTKPEWEGGELGHNEIPGDVRDDADEAIAASTETLSPHTMTASESQRASMGSIRSSRTLSEMLDGDDKDSMTMFNVVFVLDPPLLEYSMRIREIYDNIIKKFAKALKWEQARTDYVWREAQHISHIKEKAKETRTSVNTLYSELINHSSLARAIYTVYSNISASKIASVSLSPDVSISLQIPPLTSTPYLPGPGDKAYPGLWLTTADSVTPADDPTADENTAPHQVLAKHFALLLLSDEATILKDVEASGGALAPALAHYIRCSKPTKSFAQISALSGIPLSTIQMLASHLVYWRRARAIPPLHQRDVYFVSPNCDLSKLEVATAAYQLAFPTLPSLPKMLSALSGTPRPYGSFIPSKDHKEAYFAILAWLLRGGWVTQLRTFARVKVSPEIKMAVERALRREEVDKYLSKQGSSILSDHSKHNGDTSKNDDDDASSSSSSSLASQDSGEETPMPGRYKPDSKLHLSHSLLDQDTSLKTASLILFPHRAPPLESRWLDEIVSRFPKQPRFSVRGRANIDENDPEYAGLRTAMKDLWPVYIKYFNGMDALEKVPVRENLKRKLVWQVLTRLGLVTGSQSYIELDPSEQVLIGVRHW.

The N-terminal stretch at 1–23 (MSSIARPPDPCLVAIILIVRSRA) is a signal peptide. Disordered regions lie at residues 34–90 (NPLS…SADV), 129–156 (RKQR…PGDV), 168–187 (TETL…ASMG), and 549–599 (GSSI…PDSK). Residues 45–55 (PKGRRPSRAKS) show a composition bias toward basic residues. Residues 58 to 70 (SNDSSSSEESGST) are compositionally biased toward low complexity. Over residues 129 to 138 (RKQRRKKKKT) the composition is skewed to basic residues. Residues 139 to 156 (KPEWEGGELGHNEIPGDV) show a composition bias toward basic and acidic residues. Positions 555–566 (DHSKHNGDTSKN) are enriched in basic and acidic residues. Residues 572 to 583 (SSSSSSSLASQD) are compositionally biased toward low complexity.

Belongs to the NPR3 family.

In terms of biological role, mediates inactivation of the TORC1 complex in response to amino acid starvation. Required for meiotic nuclear division. The chain is Nitrogen permease regulator 3 (npr3) from Aspergillus oryzae (strain ATCC 42149 / RIB 40) (Yellow koji mold).